We begin with the raw amino-acid sequence, 107 residues long: V-type proton ATPase subunit G (107 aa).

The protein belongs to the V-ATPase G subunit family. As to quaternary structure, V-ATPase is a heteromultimeric enzyme composed of a peripheral catalytic V1 complex (components A to H) attached to an integral membrane V0 proton pore complex (components: a, c, c', c'' and d).

Its function is as follows. Catalytic subunit of the peripheral V1 complex of vacuolar ATPase (V-ATPase). V-ATPase is responsible for acidifying a variety of intracellular compartments in eukaryotic cells. This Dictyostelium discoideum (Social amoeba) protein is V-type proton ATPase subunit G (atp6v1g).